A 72-amino-acid chain; its full sequence is Translation initiation factor IF-1 (72 aa).

Positions 1–72 (MAKDDVIEVE…TRGRITYRYK (72 aa)) constitute an S1-like domain. Tyr60 carries the phosphotyrosine modification.

Belongs to the IF-1 family. As to quaternary structure, component of the 30S ribosomal translation pre-initiation complex which assembles on the 30S ribosome in the order IF-2 and IF-3, IF-1 and N-formylmethionyl-tRNA(fMet); mRNA recruitment can occur at any time during PIC assembly.

Its subcellular location is the cytoplasm. Its function is as follows. One of the essential components for the initiation of protein synthesis. Stabilizes the binding of IF-2 and IF-3 on the 30S subunit to which N-formylmethionyl-tRNA(fMet) subsequently binds. Helps modulate mRNA selection, yielding the 30S pre-initiation complex (PIC). Upon addition of the 50S ribosomal subunit IF-1, IF-2 and IF-3 are released leaving the mature 70S translation initiation complex. In Bacillus licheniformis (strain ATCC 14580 / DSM 13 / JCM 2505 / CCUG 7422 / NBRC 12200 / NCIMB 9375 / NCTC 10341 / NRRL NRS-1264 / Gibson 46), this protein is Translation initiation factor IF-1.